The chain runs to 344 residues: Mitogen-activated protein kinase mpkC (344 aa).

Residues 19-298 form the Protein kinase domain; the sequence is YANVQPVGLG…AETALQHPYL (280 aa). ATP contacts are provided by residues 25–33 and Lys48; that span reads VGLGAFGLV. Asp140 (proton acceptor) is an active-site residue. At Thr170 the chain carries Phosphothreonine. A TXY motif is present at residues 170–172; sequence TGY. Phosphotyrosine is present on Tyr172.

This sequence belongs to the protein kinase superfamily. Ser/Thr protein kinase family. MAP kinase subfamily. HOG1 sub-subfamily. It depends on Mg(2+) as a cofactor. Dually phosphorylated on Thr-170 and Tyr-172, which activates the enzyme.

It catalyses the reaction L-seryl-[protein] + ATP = O-phospho-L-seryl-[protein] + ADP + H(+). It carries out the reaction L-threonyl-[protein] + ATP = O-phospho-L-threonyl-[protein] + ADP + H(+). Its activity is regulated as follows. Activated by tyrosine and threonine phosphorylation. Functionally, mitogen-activated protein kinase required for growth on media where sorbitol or mannitol is the sole carbon source. In Aspergillus oryzae (strain ATCC 42149 / RIB 40) (Yellow koji mold), this protein is Mitogen-activated protein kinase mpkC (mpkC).